The sequence spans 113 residues: Protein FAM27E3 (113 aa).

The interval 1–113 (MGIFQLLRDR…YTHRHTHRVL (113 aa)) is disordered. Residues 77–99 (QTDRERERNTQRLRDRERRENGR) are compositionally biased toward basic and acidic residues. A compositionally biased stretch (basic residues) spans 100–113 (HTHTYTHRHTHRVL).

It belongs to the FAM27 family.

The chain is Protein FAM27E3 (FAM27E3) from Homo sapiens (Human).